The sequence spans 1891 residues: Endoribonuclease Dicer-L (1891 aa).

The region spanning 41–217 is the Helicase ATP-binding domain; sequence LLEAALDHNT…DLEEKIQKLE (177 aa). 54-61 serves as a coordination point for ATP; sequence LNSGSGKT. Residues 165 to 168 carry the DECH box motif; that stretch reads DECH. The Helicase C-terminal domain occupies 425–594; that stretch reads SFPSPFTNIL…SIDCGNTESE (170 aa). A Dicer dsRNA-binding fold domain is found at 622–714; it reads AIGHINRYCA…MPVGKETVKY (93 aa). The region spanning 887-1034 is the PAZ domain; it reads KFVEDIEKSE…LVPELCAIHP (148 aa). RNase III domains lie at 1248-1379 and 1635-1793; these read TSDM…ETSG and FENF…MDSG. The Mg(2+) site is built by glutamate 1292, aspartate 1370, glutamate 1373, glutamate 1674, aspartate 1779, and glutamate 1782. The 66-residue stretch at 1818–1883 folds into the DRBM domain; sequence VPRSPVRELL…ARRALRSLKA (66 aa).

It belongs to the helicase family. Dicer subfamily. Component of the RISC loading complex (RLC), or micro-RNA (miRNA) loading complex (miRLC), which is composed of dicer1, ago2 and tarbp2; dicer1 and tarbp2 are required to process precursor miRNAs (pre-miRNAs) to mature miRNAs and then load them onto ago2. Note that the trimeric RLC/miRLC is also referred to as RISC. It depends on Mg(2+) as a cofactor. Mn(2+) serves as cofactor.

Its subcellular location is the cytoplasm. It carries out the reaction Endonucleolytic cleavage to 5'-phosphomonoester.. In terms of biological role, double-stranded RNA (dsRNA) endoribonuclease playing a central role in short dsRNA-mediated post-transcriptional gene silencing. Cleaves naturally occurring long dsRNAs and short hairpin pre-microRNAs (miRNA) into fragments of 21 to 23 nucleotides with 3' overhang of two nucleotides, producing respectively short interfering RNAs (siRNA) and mature microRNAs. SiRNAs and miRNAs serve as guide to direct the RNA-induced silencing complex (RISC) to complementary RNAs to degrade them or prevent their translation. Gene silencing mediated by siRNAs, also called RNA interference, controls the elimination of transcripts from mobile and repetitive DNA elements of the genome but also the degradation of exogenous RNA of viral origin for instance. The miRNA pathway on the other side is a mean to specifically regulate the expression of target genes. During embryonic development, at the left-right organizer, post-transcriptionally regulates the expression of dand5 in flow sensor cells. In post-flow stages, acts along with Bicc1 to repress dand5 mRNA translation and decay. Decreased Dand5 expression lifts repression of Nodal and defines leftness by induction of the lateral plate mesoderm Nodal signaling cascade. The chain is Endoribonuclease Dicer-L (dicer1.L) from Xenopus laevis (African clawed frog).